Reading from the N-terminus, the 333-residue chain is Probable tRNA-dihydrouridine synthase 1 (333 aa).

FMN-binding positions include 17–19 (PMA) and glutamine 71. Cysteine 102 acts as the Proton donor in catalysis. Residues lysine 141, 202–204 (NGD), and 226–227 (GR) each bind FMN.

It belongs to the Dus family. It depends on FMN as a cofactor.

It carries out the reaction a 5,6-dihydrouridine in tRNA + NAD(+) = a uridine in tRNA + NADH + H(+). The enzyme catalyses a 5,6-dihydrouridine in tRNA + NADP(+) = a uridine in tRNA + NADPH + H(+). In terms of biological role, catalyzes the synthesis of 5,6-dihydrouridine (D), a modified base found in the D-loop of most tRNAs, via the reduction of the C5-C6 double bond in target uridines. This is Probable tRNA-dihydrouridine synthase 1 (dus1) from Bacillus subtilis (strain 168).